Here is a 314-residue protein sequence, read N- to C-terminus: uncharacterized protein (314 aa).

Positions 1–20 are cleaved as a signal peptide; it reads MKKRAGIWAALLLAAVMLAG. Cys-21 carries N-palmitoyl cysteine lipidation. Cys-21 carries S-diacylglycerol cysteine lipidation. The region spanning 59 to 311 is the Fe/B12 periplasmic-binding domain; it reads KIVSLMPSNT…ELAESIYPDT (253 aa).

Belongs to the bacterial solute-binding protein 8 family. As to quaternary structure, the complex is composed of two ATP-binding proteins (YvrA), two transmembrane proteins (YvrB) and a solute-binding protein (YvrC).

The protein localises to the cell membrane. Probably part of an ABC transporter complex. This is an uncharacterized protein from Bacillus subtilis (strain 168).